The chain runs to 398 residues: Probable RNA methyltransferase sce1580 (398 aa).

The disordered stretch occupies residues 1–24; sequence MRVPEIPEETASPLRAGDPPAQVA. The active-site Proton acceptor is Glu-140. A Radical SAM core domain is found at 146 to 378; the sequence is GPARTTLCVS…TLVRRPRGRD (233 aa). Cysteines 153 and 383 form a disulfide. Positions 160, 164, and 167 each coordinate [4Fe-4S] cluster. Residues 211–212, Ser-243, 265–267, and Asn-340 each bind S-adenosyl-L-methionine; these read GE and SLN. Cys-383 (S-methylcysteine intermediate) is an active-site residue.

It belongs to the radical SAM superfamily. RlmN family. [4Fe-4S] cluster is required as a cofactor.

The protein localises to the cytoplasm. This chain is Probable RNA methyltransferase sce1580, found in Sorangium cellulosum (strain So ce56) (Polyangium cellulosum (strain So ce56)).